The following is a 141-amino-acid chain: Brain ribonuclease (141 aa).

The disordered stretch occupies residues 1–25 (KETAAAKFRRQHMDSGSSSSSNSNY). The substrate site is built by lysine 7 and arginine 10. Catalysis depends on histidine 12, which acts as the Proton acceptor. Over residues 15–24 (SGSSSSSNSN) the composition is skewed to low complexity. Intrachain disulfides connect cysteine 26/cysteine 84, cysteine 40/cysteine 95, cysteine 58/cysteine 110, and cysteine 65/cysteine 72. Substrate is bound at residue 41–45 (KPVNT). Asparagine 62 is a glycosylation site (N-linked (GlcNAc...) asparagine). Positions 66 and 85 each coordinate substrate. Catalysis depends on histidine 119, which acts as the Proton donor. An O-linked (GalNAc...) threonine glycan is attached at threonine 129.

The protein belongs to the pancreatic ribonuclease family.

It is found in the secreted. This Giraffa camelopardalis (Giraffe) protein is Brain ribonuclease (BRN).